Reading from the N-terminus, the 544-residue chain is Probable protein kinase UbiB (544 aa).

Positions Asp123 to Leu501 constitute a Protein kinase domain. Residues Leu129 to Val137 and Lys152 contribute to the ATP site. Residue Asp287 is the Proton acceptor of the active site. The chain crosses the membrane as a helical span at residues Leu515–Phe537.

The protein belongs to the ABC1 family. UbiB subfamily.

The protein localises to the cell inner membrane. It participates in cofactor biosynthesis; ubiquinone biosynthesis [regulation]. Is probably a protein kinase regulator of UbiI activity which is involved in aerobic coenzyme Q (ubiquinone) biosynthesis. In Aliivibrio fischeri (strain ATCC 700601 / ES114) (Vibrio fischeri), this protein is Probable protein kinase UbiB.